A 281-amino-acid polypeptide reads, in one-letter code: MNTPEHSQLGKASAYADQYDASLLFPIPRADKRAEIGIDGNAPFFGADLWTAFELSWLNLRGKPQVAIAHITVPCETPHIVESKSFKLYLNSFNNTRFGDASEVQARLRADISEAVWRGAPHPATVGVKLIAPELFDQEPVHELDGLSLDRLDVECTRYQPAPDLLTATFNEAPVTETLTSNLLKSNCLVTGQPDWGSVQISYSGPQINQEGLLQYLVSFRNHNEFHEQCVERIFMDLWTRCKPIKLKVYARYTRRGGLDINPWRTSHPQTMPKNVRTARQ.

81-83 is a substrate binding site; sequence VES. 83 to 84 serves as a coordination point for NADPH; sequence SK. The active-site Thioimide intermediate is the cysteine 188. The active-site Proton donor is aspartate 195. 227–228 serves as a coordination point for substrate; the sequence is HE. 256-257 serves as a coordination point for NADPH; sequence RG.

This sequence belongs to the GTP cyclohydrolase I family. QueF type 2 subfamily. Homodimer.

It localises to the cytoplasm. It catalyses the reaction 7-aminomethyl-7-carbaguanine + 2 NADP(+) = 7-cyano-7-deazaguanine + 2 NADPH + 3 H(+). It functions in the pathway tRNA modification; tRNA-queuosine biosynthesis. In terms of biological role, catalyzes the NADPH-dependent reduction of 7-cyano-7-deazaguanine (preQ0) to 7-aminomethyl-7-deazaguanine (preQ1). The chain is NADPH-dependent 7-cyano-7-deazaguanine reductase from Acidovorax ebreus (strain TPSY) (Diaphorobacter sp. (strain TPSY)).